Reading from the N-terminus, the 249-residue chain is MSLCELAASGSSLLWPRVLLFGDSITQFSFQQGGWGTLLADRLVRKCDVLNRGFSGYNTRWAKIILPRIIRKGAGLENPVAVTIFFGANDSTLKDENPKQHVPLDEYSANLRDMVQYLRSVDIPKERVILITPPPLCEAAWEKECILKGCKLNRLNVAVGEYAKACLQVARDCGTDVLDLWTLMQKDNQDFSSYLSDGLHLSPLGNEFLFFHLWPLLDKKVSSLPRLLPDWKDVEETKPELSLLGDGDH.

The active-site Nucleophile is the Ser-24. An N6-succinyllysine modification is found at Lys-63. Asp-197 functions as the Proton donor in the catalytic mechanism. The active-site Proton acceptor is His-200.

This sequence belongs to the 'GDSL' lipolytic enzyme family. IAH1 subfamily.

Functionally, probable lipase. In Rattus norvegicus (Rat), this protein is Isoamyl acetate-hydrolyzing esterase 1 homolog (Iah1).